We begin with the raw amino-acid sequence, 1309 residues long: Lysine-specific demethylase 2B (1309 aa).

Position 26 is a phosphoserine (serine 26). The 169-residue stretch at 147-315 (FSHTKLEHLV…MQLRIYEIED (169 aa)) folds into the JmjC domain. Residue threonine 208 coordinates substrate. Fe cation-binding residues include histidine 211 and aspartate 213. Lysine 228 contacts substrate. Histidine 283 lines the Fe cation pocket. A compositionally biased stretch (acidic residues) spans 378 to 403 (DMEEESCEQQPQEEEEEEEDKEEEGD). The tract at residues 378 to 476 (DMEEESCEQQ…PTGSPATEVS (99 aa)) is disordered. Basic and acidic residues predominate over residues 404 to 413 (GADKTPKPPT). Over residues 415 to 424 (DPTSPTSTPP) the composition is skewed to low complexity. 2 positions are modified to phosphoserine: serine 447 and serine 450. Threonine 466 carries the post-translational modification Phosphothreonine. The span at 467–476 (PTGSPATEVS) shows a compositional bias: polar residues. A Phosphoserine modification is found at serine 470. Residues 579–625 (ARRRRTRCRKCEACLRTECGECHFCKDMKKFGGPGRMKQSCIMRQCI) form a CXXC-type zinc finger. Zn(2+) is bound by residues cysteine 586, cysteine 589, cysteine 592, cysteine 597, cysteine 600, cysteine 603, cysteine 619, cysteine 624, cysteine 635, cysteine 638, cysteine 661, cysteine 664, histidine 669, cysteine 672, cysteine 692, and cysteine 695. The PHD-type zinc-finger motif lies at 632 to 698 (TAVCLVCGEA…CWECPKCNHA (67 aa)). Disordered regions lie at residues 700–816 (KTGK…SLSP) and 828–1005 (QLKP…SASP). Over residues 722 to 772 (KEQKMNRDNKEGQEPAKRRSECEEAPRRRSDEHPKKVPADGILRRKSDDVH) the composition is skewed to basic and acidic residues. A compositionally biased stretch (low complexity) spans 792–816 (SSLQTSPGSSSHLSPRPPLGSSLSP). Glycyl lysine isopeptide (Lys-Gly) (interchain with G-Cter in SUMO2) cross-links involve residues lysine 830 and lysine 863. A compositionally biased stretch (polar residues) spans 883 to 892 (SRSSSPTAGP). Residues 905 to 914 (KVKMRRKRRL) are compositionally biased toward basic residues. Residues 915–933 (VNKELSKELSKELNHEIQK) are compositionally biased toward basic and acidic residues. A coiled-coil region spans residues 916–944 (NKELSKELSKELNHEIQKTESTLAHESQQ). Serine 924 carries the post-translational modification Phosphoserine. Residues 934 to 946 (TESTLAHESQQPI) are compositionally biased toward polar residues. Residues serine 948 and serine 952 each carry the phosphoserine modification. Over residues 955 to 968 (DEPKRPLSHCERPH) the composition is skewed to basic and acidic residues. 2 positions are modified to phosphoserine: serine 991 and serine 1004. The 47-residue stretch at 1032-1078 (DGAAHVMHREVWMAVFSYLSHRDLCVCMRVCRTWNRWCCDKRLWTRI) folds into the F-box domain. 6 LRR repeats span residues 1106–1127 (WTNI…LRDL), 1129–1155 (LSGC…DVQW), 1195–1220 (GLDI…QLSY), 1221–1250 (CNHI…NLSD), 1251–1275 (CNKV…DLRY), and 1276–1309 (CKQV…QKLS).

Belongs to the JHDM1 histone demethylase family. As to quaternary structure, interacts with SKP1, forming heterodimers. The KDM2B-SKP1 heterodimeric complex interacts with the PCGF1-BCORL heterodimeric complex to form a homotetrameric polycomb repression complex 1 (PRC1.1). Directly interacts with CUL1. The SKP1-KDM2B interacts with UBB. It depends on Fe(2+) as a cofactor.

It localises to the nucleus. It is found in the nucleolus. The protein localises to the chromosome. It carries out the reaction N(6),N(6)-dimethyl-L-lysyl(36)-[histone H3] + 2 2-oxoglutarate + 2 O2 = L-lysyl(36)-[histone H3] + 2 formaldehyde + 2 succinate + 2 CO2. With respect to regulation, histone demethylase activity is inhibited by fumarate. Functionally, histone demethylase that demethylates 'Lys-4' and 'Lys-36' of histone H3, thereby playing a central role in histone code. Preferentially demethylates trimethylated H3 'Lys-4' and dimethylated H3 'Lys-36' residue while it has weak or no activity for mono- and tri-methylated H3 'Lys-36'. Preferentially binds the transcribed region of ribosomal RNA and represses the transcription of ribosomal RNA genes which inhibits cell growth and proliferation. May also serve as a substrate-recognition component of the SCF (SKP1-CUL1-F-box protein)-type E3 ubiquitin ligase complex. This is Lysine-specific demethylase 2B (Kdm2b) from Mus musculus (Mouse).